The sequence spans 487 residues: uncharacterized protein (487 aa).

3 helical membrane-spanning segments follow: residues 10-30 (AALMGALAVVLITAAPVAADA), 45-65 (VISPVAIPCVALGKFADAVAA), and 439-459 (APVVFAGAALACTAIGADFTL).

It localises to the cell membrane. This is an uncharacterized protein from Mycobacterium tuberculosis (strain CDC 1551 / Oshkosh).